The sequence spans 404 residues: Phosphoglycerate kinase (404 aa).

Substrate contacts are provided by residues 22 to 24 (DLN), arginine 37, 60 to 63 (HLGR), arginine 119, and arginine 156. ATP is bound by residues lysine 206, glycine 302, glutamate 333, and 359 to 362 (GGDS).

It belongs to the phosphoglycerate kinase family. In terms of assembly, monomer.

The protein resides in the cytoplasm. The enzyme catalyses (2R)-3-phosphoglycerate + ATP = (2R)-3-phospho-glyceroyl phosphate + ADP. It participates in carbohydrate degradation; glycolysis; pyruvate from D-glyceraldehyde 3-phosphate: step 2/5. The polypeptide is Phosphoglycerate kinase (Clavibacter michiganensis subsp. michiganensis (strain NCPPB 382)).